Reading from the N-terminus, the 193-residue chain is MATPASAPDTRALVADFVGYKLRQKGYVCGAGPGEGPAADPLHQAMRAAGDEFETRFRRTFSDLAAQLHVTPGSAQQRFTQVSDELFQGGPNWGRLVAFFVFGAALCAESVNKEMEPLVGQVQEWMVAYLETQLADWIHSSGGWAEFTALYGDGALEEARRLREGNWASVRTVLTGAVALGALVTVGAFFASK.

Residue Ala2 is modified to N-acetylalanine. The short motif at Asp9–Cys29 is the BH4 element. The short motif at Glu85–Ala104 is the BH1 element. Residues Asp136–Tyr151 carry the BH2 motif. Ala177 is subject to Phosphoserine.

Belongs to the Bcl-2 family. As to quaternary structure, interacts with HIF3A (via C-terminus domain). Interacts with BOP. In terms of tissue distribution, expressed (at protein level) in a wide range of tissues with highest levels in brain, spinal cord, testis, pancreas, heart, spleen and mammary glands. Moderate levels found in thymus, ovary and small intestine. Not detected in salivary gland, muscle or liver. Also expressed in cell lines of myeloid, fibroblast and epithelial origin. Not detected in most lymphoid cell lines.

It localises to the mitochondrion membrane. In terms of biological role, promotes cell survival. Blocks dexamethasone-induced apoptosis. Mediates survival of postmitotic Sertoli cells by suppressing death-promoting activity of BAX. In Homo sapiens (Human), this protein is Bcl-2-like protein 2 (BCL2L2).